We begin with the raw amino-acid sequence, 417 residues long: Serpin H1 (417 aa).

A signal peptide spans 1 to 17 (MRSLLLGTLCLLAVALA). Lys-93 is modified (N6-succinyllysine). N-linked (GlcNAc...) asparagine glycans are attached at residues Asn-119 and Asn-124. Phosphoserine is present on Ser-140. Lys-206 carries the N6-acetyllysine modification. Lys-295 bears the N6-succinyllysine mark. Lys-318 is modified (N6-acetyllysine). N-linked (GlcNAc...) asparagine glycosylation occurs at Asn-394. The Prevents secretion from ER motif lies at 414 to 417 (RDEL).

This sequence belongs to the serpin family.

It localises to the endoplasmic reticulum lumen. Functionally, binds specifically to collagen. Could be involved as a chaperone in the biosynthetic pathway of collagen. The sequence is that of Serpin H1 (Serpinh1) from Rattus norvegicus (Rat).